A 682-amino-acid polypeptide reads, in one-letter code: Guanylate cyclase soluble subunit beta-2 (682 aa).

Histidine 43 is a heme binding site. A Guanylate cyclase domain is found at 408-536 (TILFSDVVTF…DTVNTASRME (129 aa)). Residues 592-667 (MGRPSAPADG…QPSPDETKTS (76 aa)) are disordered. A compositionally biased stretch (polar residues) spans 649 to 667 (RNSTDAVNNQPSPDETKTS).

It belongs to the adenylyl cyclase class-4/guanylyl cyclase family. As to quaternary structure, heterodimer of an alpha and a beta chain. The cofactor is heme. In terms of tissue distribution, kidney and liver.

It localises to the cytoplasm. The enzyme catalyses GTP = 3',5'-cyclic GMP + diphosphate. With respect to regulation, activated by nitric oxide in the presence of magnesium or manganese ions. The protein is Guanylate cyclase soluble subunit beta-2 (Gucy1b2) of Rattus norvegicus (Rat).